Consider the following 269-residue polypeptide: Malonyl-[acyl-carrier protein] O-methyltransferase (269 aa).

This sequence belongs to the methyltransferase superfamily.

It carries out the reaction malonyl-[ACP] + S-adenosyl-L-methionine = malonyl-[ACP] methyl ester + S-adenosyl-L-homocysteine. The protein operates within cofactor biosynthesis; biotin biosynthesis. Functionally, converts the free carboxyl group of a malonyl-thioester to its methyl ester by transfer of a methyl group from S-adenosyl-L-methionine (SAM). It allows to synthesize pimeloyl-ACP via the fatty acid synthetic pathway. This chain is Malonyl-[acyl-carrier protein] O-methyltransferase, found in Bacillus anthracis.